The following is a 520-amino-acid chain: 2-isopropylmalate synthase (520 aa).

In terms of domain architecture, Pyruvate carboxyltransferase spans 12–274 (VVIFDTTLRD…DTGIDTTMLT (263 aa)). Mn(2+) contacts are provided by D21, H209, H211, and N245. Residues 398–520 (KLLSLSVIAG…RLHAQHAAVV (123 aa)) are regulatory domain.

Belongs to the alpha-IPM synthase/homocitrate synthase family. LeuA type 1 subfamily. Homodimer. Mn(2+) is required as a cofactor.

It localises to the cytoplasm. The catalysed reaction is 3-methyl-2-oxobutanoate + acetyl-CoA + H2O = (2S)-2-isopropylmalate + CoA + H(+). The protein operates within amino-acid biosynthesis; L-leucine biosynthesis; L-leucine from 3-methyl-2-oxobutanoate: step 1/4. Its function is as follows. Catalyzes the condensation of the acetyl group of acetyl-CoA with 3-methyl-2-oxobutanoate (2-ketoisovalerate) to form 3-carboxy-3-hydroxy-4-methylpentanoate (2-isopropylmalate). This chain is 2-isopropylmalate synthase, found in Methylorubrum populi (strain ATCC BAA-705 / NCIMB 13946 / BJ001) (Methylobacterium populi).